The following is a 584-amino-acid chain: Transcription factor COE1 (584 aa).

Met1 is subject to N-acetylmethionine. Polar residues predominate over residues 1–14 (MFGIQESIQRSGSS). The tract at residues 1–21 (MFGIQESIQRSGSSMKEEPLG) is disordered. Lys16 is covalently cross-linked (Glycyl lysine isopeptide (Lys-Gly) (interchain with G-Cter in SUMO1); alternate). Lys16 participates in a covalent cross-link: Glycyl lysine isopeptide (Lys-Gly) (interchain with G-Cter in SUMO2); alternate. An interaction with DNA region spans residues 63–66 (RKSN). Residues 151–170 (CRVLLTHEIMCSRCCDKKSC) form a C5-type zinc finger. Interaction with DNA regions lie at residues 197–204 (NCLKNAGN) and 236–239 (NNSK). One can recognise an IPT/TIG domain in the interval 255–338 (PCIKAISPSE…KGTPGRFIYT (84 aa)). The disordered stretch occupies residues 450 to 473 (GFTRNSSSVSPHGYVPSTTPQQTN).

It belongs to the COE family. In terms of assembly, homodimer. Interacts with ZNF423 and ZNF521, leading to prevent EBF1 to bind DNA and activate target genes. Interacts with CCR4-NOT component CNOT3. In terms of tissue distribution, expressed exclusively in olfactory receptor neurons and their precursors.

It localises to the nucleus. Functionally, key pioneer transcription factor of B-cell specification and commitment. Recognizes variations of the palindromic sequence 5'-ATTCCCNNGGGAATT-3'. Operates in a transcription factor network to activate B-cell-specific genes and repress genes associated with alternative cell fates. For instance, positively regulates many B-cell specific genes including BCR or CD40 while repressing genes that direct cells into alternative lineages, including GATA3 and TCF7 for the T-cell lineage. In addition to its role during lymphopoiesis, controls the thermogenic gene program in adipocytes during development and in response to environmental cold. The polypeptide is Transcription factor COE1 (Ebf1) (Rattus norvegicus (Rat)).